The chain runs to 300 residues: Tyrosine recombinase XerC (300 aa).

The Core-binding (CB) domain occupies 2–88; it reads IQEGKLEQQF…SLRSFYTFLL (87 aa). Residues 109–294 form the Tyr recombinase domain; the sequence is RLPKFFYSEE…TKEHLKSTYM (186 aa). Catalysis depends on residues Arg-150, Lys-174, His-246, Arg-249, and His-272. Tyr-281 acts as the O-(3'-phospho-DNA)-tyrosine intermediate in catalysis.

This sequence belongs to the 'phage' integrase family. XerC subfamily. In terms of assembly, forms a cyclic heterotetrameric complex composed of two molecules of XerC and two molecules of XerD.

It localises to the cytoplasm. Its function is as follows. Site-specific tyrosine recombinase, which acts by catalyzing the cutting and rejoining of the recombining DNA molecules. The XerC-XerD complex is essential to convert dimers of the bacterial chromosome into monomers to permit their segregation at cell division. It also contributes to the segregational stability of plasmids. This is Tyrosine recombinase XerC from Listeria monocytogenes serovar 1/2a (strain ATCC BAA-679 / EGD-e).